A 104-amino-acid polypeptide reads, in one-letter code: Large ribosomal subunit protein uL24 (104 aa).

This sequence belongs to the universal ribosomal protein uL24 family. As to quaternary structure, part of the 50S ribosomal subunit.

Its function is as follows. One of two assembly initiator proteins, it binds directly to the 5'-end of the 23S rRNA, where it nucleates assembly of the 50S subunit. Functionally, one of the proteins that surrounds the polypeptide exit tunnel on the outside of the subunit. In Clostridium perfringens (strain ATCC 13124 / DSM 756 / JCM 1290 / NCIMB 6125 / NCTC 8237 / Type A), this protein is Large ribosomal subunit protein uL24.